A 99-amino-acid chain; its full sequence is Large ribosomal subunit protein bL27 (99 aa).

Positions 1–9 (MLIMNLQLF) are excised as a propeptide.

The protein belongs to the bacterial ribosomal protein bL27 family. Post-translationally, the N-terminus is cleaved by ribosomal processing cysteine protease Prp.

This Clostridium botulinum (strain Eklund 17B / Type B) protein is Large ribosomal subunit protein bL27.